The chain runs to 299 residues: B-box zinc finger protein 22 (299 aa).

Residues Cys-5, Cys-8, Cys-28, His-33, Cys-57, Cys-60, Cys-80, and His-85 each contribute to the Zn(2+) site. A B box-type 1; atypical zinc finger spans residues 5 to 47 (CNVCEAAEATVLCCADEAALCWACDEKIHAANKLAGKHQRVPL). The segment at 57 to 99 (CDICQEASGFFFCLQDRALLCRKCDVAIHTVNPHVSAHQRFLL) adopts a B box-type 2; atypical zinc-finger fold. Disordered stretches follow at residues 143-181 (FDHHHHQQQQEQQEGVIPGTKVNDQTSTKLPLVSSGSTT) and 206-299 (ENNG…RRRF). Polar residues-rich tracts occupy residues 164-181 (VNDQTSTKLPLVSSGSTT), 251-260 (QIQSPPTASG), and 277-290 (ITSSTPYTGSSPNQ).

Interacts with HY5. Post-translationally, ubiquitinated by COP1 in vitro. COP1-mediated degradation of BBX22 by the proteasome occurs in the dark and is important for a precise skotomorphogenesis process and optimization of seedling growth under short days conditions.

It localises to the nucleus. In terms of biological role, acts as a positive regulator of seedling photomorphogenesis and light-regulated inhibition of hypocotyl elongation, independently and in concert with HY5 and BBX21. Acts as a positive regulator of de-etiolation and influences chloroplast biogenesis and function through regulation of genes encoding chloroplast proteins. Acts downstream of COP1 and plays an important role in early and long-term adjustment of the shade avoidance syndrome (SAS) responses in natural environments. Regulates the expression of genes responsive to light hormone signals which may contribute to optimal seedling development. The protein is B-box zinc finger protein 22 of Arabidopsis thaliana (Mouse-ear cress).